Reading from the N-terminus, the 108-residue chain is uncharacterized protein (108 aa).

The first 20 residues, 1–20, serve as a signal peptide directing secretion; the sequence is MNLKSIIFVLFIAFFAFSLA. A glycan (N-linked (GlcNAc...) asparagine) is linked at N39.

This sequence belongs to the Dictyostelium gerABC family.

Its subcellular location is the secreted. This is an uncharacterized protein from Dictyostelium discoideum (Social amoeba).